An 884-amino-acid polypeptide reads, in one-letter code: Kinesin-like protein KIN-7C (884 aa).

The region spanning 33-355 (RIQVLVRLRP…LLFGSCAKEV (323 aa)) is the Kinesin motor domain. 119–126 (GQTSSGKT) lines the ATP pocket. Residues 364–435 (VMSDKALVKH…LQDLLQSVGD (72 aa)) adopt a coiled-coil conformation. The interval 434-530 (GDHDLNRQVQ…VNSRHSRPSG (97 aa)) is disordered. Residues 449 to 460 (RSPPSVGMPPSV) are compositionally biased toward low complexity. Residues 461-483 (SRDDSSQVSHDDSDLYKEVRCIE) are compositionally biased toward basic and acidic residues. The span at 498–523 (GESSSPQDSNMNSGLHGNDSNASVNS) shows a compositional bias: polar residues.

The protein belongs to the TRAFAC class myosin-kinesin ATPase superfamily. Kinesin family. KIN-7 subfamily.

This chain is Kinesin-like protein KIN-7C, found in Oryza sativa subsp. japonica (Rice).